The sequence spans 24 residues: 60 kDa chaperonin, mitochondrial (24 aa).

The protein belongs to the chaperonin (HSP60) family. In terms of assembly, forms a single seven-member ring complex, in tight association with the p63 protein. In terms of tissue distribution, testis.

It localises to the mitochondrion. Implicated in mitochondrial protein import and macromolecular assembly. May facilitate the correct folding of imported proteins. May also prevent misfolding and promote the refolding and proper assembly of unfolded polypeptides generated under stress conditions in the mitochondrial matrix. This chain is 60 kDa chaperonin, mitochondrial, found in Heliothis virescens (Tobacco budworm moth).